The chain runs to 394 residues: Phosphoglycerate kinase (394 aa).

Substrate contacts are provided by residues 21 to 23, arginine 36, 59 to 62, arginine 118, and arginine 151; these read DFN and HFGR. ATP is bound by residues lysine 201, glutamate 323, and 349 to 352; that span reads GGDS.

This sequence belongs to the phosphoglycerate kinase family. As to quaternary structure, monomer.

It localises to the cytoplasm. It carries out the reaction (2R)-3-phosphoglycerate + ATP = (2R)-3-phospho-glyceroyl phosphate + ADP. The protein operates within carbohydrate degradation; glycolysis; pyruvate from D-glyceraldehyde 3-phosphate: step 2/5. This Brevibacillus brevis (strain 47 / JCM 6285 / NBRC 100599) protein is Phosphoglycerate kinase.